A 446-amino-acid polypeptide reads, in one-letter code: Citrate/sodium symporter (446 aa).

A run of 5 helical transmembrane segments spans residues 23–43 (IFGMPLPLYAFALITLLLSHF), 46–66 (AIPTDLVGGFALMFVMGAIFG), 79–99 (IGGAPVMIFLVAAYFVYAGIF), 110–130 (VMDKSNFLNLFIAVLITGAIL), and 148–168 (ILAGIVGASLFGIVIGLCFGI). Residues Ile181 and Gly183 each contribute to the Na(+) site. Citrate contacts are provided by Asn186 and Gly187. Helical transmembrane passes span 213–233 (IAILTIANIFAIIFAALLDMI), 267–287 (ETAVGMVLSTTCFLLAYVVAK), 289–309 (ILPSIGGVSIHYFAWMVLIVA), 335–355 (QLLWVLMVGVGVCYTDLQEII), and 364–384 (VIAAIIVVGAVVGAAIGGWLI). Residues Met399 and Asn401 each contribute to the Na(+) site. Positions 402, 404, 405, and 428 each coordinate citrate. A helical membrane pass occupies residues 425–445 (ISSRLGGGIVLVIASIVFSMM).

The protein belongs to the 2-hydroxycarboxylate transporter (2-HCT) (TC 2.A.24) family. In terms of assembly, homodimer.

Its subcellular location is the cell inner membrane. It catalyses the reaction citrate(out) + 2 Na(+)(out) = citrate(in) + 2 Na(+)(in). Functionally, secondary active transporter that catalyzes the uptake of citrate across the membrane with the concomitant uptake of sodium. Is specific for citrate. The protein is Citrate/sodium symporter of Salmonella pullorum.